A 561-amino-acid polypeptide reads, in one-letter code: Long-chain-fatty-acid--CoA ligase (561 aa).

213–224 (YTGGTTGVAKGA) provides a ligand contact to ATP.

It belongs to the ATP-dependent AMP-binding enzyme family. Requires Mg(2+) as cofactor.

It localises to the membrane. It carries out the reaction a long-chain fatty acid + ATP + CoA = a long-chain fatty acyl-CoA + AMP + diphosphate. It participates in lipid metabolism; fatty acid beta-oxidation. Catalyzes the esterification, concomitant with transport, of exogenous long-chain fatty acids into metabolically active CoA thioesters for subsequent degradation or incorporation into phospholipids. This is Long-chain-fatty-acid--CoA ligase (fadD) from Salmonella typhi.